We begin with the raw amino-acid sequence, 1781 residues long: MARRMSMYSMASEAMGGPQAPQQMSTTTLLNAIHNIYLSSQPYQIDAGTSLVVNTWLTAAQAGATVDATLAARAWEHARRRAEDGCVVLGSLHQATPSLLVPFLNTFPFAIPASIYKSLEAVQPFLRCVTPYNASAPRQIALGVTLTLSLGGSVTGASLALSQGGIDTENGLLNVPAEAGYRAFDVFYYLLTSASTPAEREFLGLKAPSAYALLARSGTYEPPSYLITADDGAAADDFRQALKEIGIKGSVHRNFISTLAGLLKLGNTLDYDADSDDFEEICEDVSGLLGMEPEVLMQQLSTEDRRTLVAGLYEALVDWVISKANAAIAAQMLRIRDGDESVDGRGVRTPNENEDGDTVSITVVEVPEPALGRALAMRTIFDDTLGINAEMIEDGVEIHPASSSVVREMQQAVADVAPDLGIMTGPQGRDRQHDIEKREVILEKAAYASEEDSFLKKLLFPVEGQGINLGRTGRFDLPGLLSSSRAWFHLALHPTDDSPANLATLPAITSAWSAGTISRQLRSWRLPEWANRRNRSLDYTADFDVDEFVGRYGALGCKDGKDGIETWMLERGWSNGEVFIGKERIWVREGPWWEAESMLDIKPAHSLQSIGQNPFTSGFDTSYSANPPNGSGFFPAPAMDNSMNGSNDQLMHTRNFSQGNMSQATFNQHPHLNPQSAPSIAPSAMRNAQPATGDYGLGNKGDTYKGQVFYNDDGDFTGKLDGDLAKDKKIETKPLTFGRRAWVAFVWALTFWIPSPLLKFVGRMRRPDVRMAWREKLVLFFIILLLNGLIIFWIIGFGKLLCPNANKAWNVKEVAGHAEDEDAFWVAIFGKVYDITDFWRQQHSDTSIKTTKTNMLPLAGMVMDNYFMPPLNRACRGLGIKETVQLTFNETITNPLAQHVSGFYTRDRTSALHNADWFWTTFQPKIKEYYHGDLVWKEGTVKSQGSGSEQHPWVMYGNQIYDLTDYLHTLDVNDNFDTYKFLNEDMVNLWKNSPGTNIKKDLDLLISNAKNETVAANLKNSWQCIQNIAYKGIVDFRDSPRCRVNNWLLLAFAIIICIVTAVKFLAALQFGSKRRPSPQDKFVICQVPVYTEGEDSLRKALDSLTALQYDNKRKLICVICDGVVVGEGNDRPTPKIVLDILGVDPKVDPPALPFKSVGNSAEQLNYGKVYSGLYEFEGNVVPYIVVVKVGKESEQTKSKPGNRGKRDSQILLMSFLNRVHHRAPMSPLELEMFHQVNNIIGVDPELYEYLLMIDADTCVEEDALNRLVAACAHDAKIAGICGETALENDEKTWWTMIQVYEYFISHHLAKAFESLFGSVTCLPGCFTMYRLRSVDKGKPLIISDGVIKDYSVCDVDTLHKKNLLSLGEDRYLTTLMTKYFPEMSYKFIPDAQCKTAAPESWSVLLSQRRRWINSTIHNLVELMQLKELCGFCCFSMRFVVFIDLTGTIILPSTTVYIGYLIYVLATGTGPIPYISLAMIGAVYGHQALIFILKRQWQHIGWMIIYILAFPIYSFILPLYSFWNQDNFSWGNTRIVIGEKGDKQVVAVDDEGFDPRSIPLQRWDDYAMANNLPGRRGGYQEKTDYSYGDNYELDEIKSVYSAGPQGSVLTGMPGRNTYMPPSPAFNNGRTSTMGFQESPMQHRQSMMSMGTGVHDMRSQSPYQDYPGQHPGVANLRGQANLSPAAGGGHSRSGTALGFSSGSRSPMPDAMRSQSSFDFQHGQGGPTDMAIVESIRSVLCEVDLDTVTKKQVRALVEQRLQTELVGERRTFMDRQIDHELENM.

6 N-linked (GlcNAc...) asparagine glycosylation sites follow: N133, N534, N629, N644, N655, and N660. Transmembrane regions (helical) follow at residues 741 to 761 and 777 to 797; these read AWVA…LKFV and LVLF…IIGF. N-linked (GlcNAc...) asparagine glycosylation is found at N889 and N1011. A helical transmembrane segment spans residues 1048-1068; sequence LLLAFAIIICIVTAVKFLAAL. N-linked (GlcNAc...) asparagine glycosylation is present at N1413. Helical transmembrane passes span 1444-1464, 1471-1491, and 1499-1519; these read LTGT…IYVL, IPYI…LIFI, and IGWM…LPLY. N1526 is a glycosylation site (N-linked (GlcNAc...) asparagine). Positions 1677-1712 are disordered; it reads QANLSPAAGGGHSRSGTALGFSSGSRSPMPDAMRSQ. A compositionally biased stretch (polar residues) spans 1690–1702; it reads RSGTALGFSSGSR. The region spanning 1723–1779 is the DEK-C domain; sequence GPTDMAIVESIRSVLCEVDLDTVTKKQVRALVEQRLQTELVGERRTFMDRQIDHELE.

Belongs to the chitin synthase family. Class V subfamily.

It localises to the cell membrane. The enzyme catalyses [(1-&gt;4)-N-acetyl-beta-D-glucosaminyl](n) + UDP-N-acetyl-alpha-D-glucosamine = [(1-&gt;4)-N-acetyl-beta-D-glucosaminyl](n+1) + UDP + H(+). Functionally, polymerizes chitin, a structural polymer of the cell wall and septum, by transferring the sugar moiety of UDP-GlcNAc to the non-reducing end of the growing chitin polymer. Shows additive effects in septum formation with CHS1, CHS2, CHS3A, CHS4, CHS5 and CHS6. Indispensable for perithecia formation and regulates conidiation. Plays an important role in the response to cell wall stress. Also required for hyphal growth and pathogenicity. This chain is Chitin synthase 7, found in Gibberella zeae (strain ATCC MYA-4620 / CBS 123657 / FGSC 9075 / NRRL 31084 / PH-1) (Wheat head blight fungus).